The following is a 377-amino-acid chain: Guanine nucleotide-binding protein subunit beta (377 aa).

WD repeat units lie at residues 63–93, 105–135, 154–185, 202–233, 246–276, 293–323, and 339–369; these read GHTGKVYSLDWTPEKNRIVSASQDGRLIVWN, LPCAWVMTCAFSPSGQSVACGGLDSACSIFN, GHKGYVSSCQYVPDEDTHLITSSGDQTCVLWD, GHTADVLSVSISSSNPKLFVSGSCDTTARLWD, GHESDVNTVKFFPDGNRFGTGSDDGSCRLFD, GDIPHVTSMAFSISGRLLFVGYSNGDCYVWD, and SHEGRISCLGLSADGSALCTGSWDTNLKIWA.

The protein belongs to the WD repeat G protein beta family. As to quaternary structure, g proteins are composed of 3 units, alpha, beta and gamma.

Its function is as follows. Guanine nucleotide-binding proteins (G proteins) are involved as a modulator or transducer in various transmembrane signaling systems. The beta and gamma chains are required for the GTPase activity, for replacement of GDP by GTP, and for G protein-effector interaction. This chain is Guanine nucleotide-binding protein subunit beta (GB1), found in Solanum tuberosum (Potato).